A 37-amino-acid polypeptide reads, in one-letter code: Large ribosomal subunit protein bL36 (37 aa).

This sequence belongs to the bacterial ribosomal protein bL36 family.

In Listeria innocua serovar 6a (strain ATCC BAA-680 / CLIP 11262), this protein is Large ribosomal subunit protein bL36.